The primary structure comprises 257 residues: Thiazole synthase (257 aa).

The active-site Schiff-base intermediate with DXP is the lysine 98. 1-deoxy-D-xylulose 5-phosphate contacts are provided by residues glycine 159, 185 to 186 (AG), and 207 to 208 (NT).

Belongs to the ThiG family. In terms of assembly, homotetramer. Forms heterodimers with either ThiH or ThiS.

It is found in the cytoplasm. The enzyme catalyses [ThiS sulfur-carrier protein]-C-terminal-Gly-aminoethanethioate + 2-iminoacetate + 1-deoxy-D-xylulose 5-phosphate = [ThiS sulfur-carrier protein]-C-terminal Gly-Gly + 2-[(2R,5Z)-2-carboxy-4-methylthiazol-5(2H)-ylidene]ethyl phosphate + 2 H2O + H(+). The protein operates within cofactor biosynthesis; thiamine diphosphate biosynthesis. Its function is as follows. Catalyzes the rearrangement of 1-deoxy-D-xylulose 5-phosphate (DXP) to produce the thiazole phosphate moiety of thiamine. Sulfur is provided by the thiocarboxylate moiety of the carrier protein ThiS. In vitro, sulfur can be provided by H(2)S. In Anaeromyxobacter sp. (strain Fw109-5), this protein is Thiazole synthase.